The following is a 236-amino-acid chain: Putative glutamine amidotransferase-like protein YvdE (236 aa).

The Glutamine amidotransferase type-1 domain maps to 17–236; sequence SPFWWNKVSY…IFEIFANGTI (220 aa).

This Lactococcus lactis subsp. lactis (strain IL1403) (Streptococcus lactis) protein is Putative glutamine amidotransferase-like protein YvdE (yvdE).